The primary structure comprises 258 residues: UPF0758 protein Bcep1808_2579 (258 aa).

Residues 136-258 (PIDSPGAVED…TFSFARAGWL (123 aa)) form the MPN domain. Residues H207, H209, and D220 each contribute to the Zn(2+) site. The JAMM motif signature appears at 207–220 (HNHPSGAVQPSAED).

Belongs to the UPF0758 family.

This Burkholderia vietnamiensis (strain G4 / LMG 22486) (Burkholderia cepacia (strain R1808)) protein is UPF0758 protein Bcep1808_2579.